The primary structure comprises 698 residues: Sulfhydryl oxidase 2 (698 aa).

Positions 1–21 (MAAAGAAVARSPGIGAGPALR) are cleaved as a signal peptide. Residues 34–178 (PRLLVLLAAA…RQTMIDFLQN (145 aa)) enclose the Thioredoxin domain. N-linked (GlcNAc...) asparagine glycosylation occurs at N77. Catalysis depends on nucleophile residues C91 and C94. 2 disulfides stabilise this stretch: C91-C94 and C122-C131. 3 N-linked (GlcNAc...) asparagine glycosylation sites follow: N178, N218, and N266. C418 and C430 are disulfide-bonded. An ERV/ALR sulfhydryl oxidase domain is found at 421-530 (SRSELRGYPC…EDPRFPKLQW (110 aa)). Residues R426, W433, H437, E478, H482, 505–512 (WKKHNMVN), K527, and W530 each bind FAD. A disulfide bridge connects residues C476 and C479. C536 and C539 are disulfide-bonded. Residues 570 to 624 (TYSADQGDSSEGGTLARGEEEEKRLTPPEVSHGDRDTQSVRPPGALGPRPALPES) form a disordered region. Polar residues predominate over residues 572 to 581 (SADQGDSSEG). At S579 the chain carries Phosphoserine. Residues 586-607 (RGEEEEKRLTPPEVSHGDRDTQ) show a composition bias toward basic and acidic residues. The span at 610–622 (RPPGALGPRPALP) shows a compositional bias: low complexity. Residues 662-682 (SLCVVLYVASSLFLMVMYFFF) form a helical membrane-spanning segment.

The protein belongs to the quiescin-sulfhydryl oxidase (QSOX) family. The cofactor is FAD. As to expression, expressed in pancreas, brain, placenta, kidney, heart and fetal tissues. Weakly expressed in lung, liver and skeletal muscles.

The protein localises to the membrane. Its subcellular location is the secreted. It is found in the cell membrane. The protein resides in the nucleus membrane. It carries out the reaction 2 R'C(R)SH + O2 = R'C(R)S-S(R)CR' + H2O2. Its function is as follows. Catalyzes the oxidation of sulfhydryl groups in peptide and protein thiols to disulfides with the reduction of oxygen to hydrogen peroxide. May contribute to disulfide bond formation in a variety of secreted proteins. Also seems to play a role in regulating the sensitization of neuroblastoma cells for interferon-gamma-induced apoptosis. The protein is Sulfhydryl oxidase 2 (QSOX2) of Homo sapiens (Human).